The chain runs to 530 residues: Fusaric acid resistance protein FusA (530 aa).

An N-terminal signal peptide occupies residues 1–23; that stretch reads MQSPATKGTLALAVLAVSLIMAG. A lipid anchor (N-palmitoyl cysteine) is attached at Cys24. A lipid anchor (S-diacylglycerol cysteine) is attached at Cys24. 2 disordered regions span residues 375-442 and 476-530; these read NAGV…RQRA and GVET…PAAR. 2 stretches are compositionally biased toward low complexity: residues 421 to 430 and 494 to 530; these read RPQLPAVARR and AAGA…PAAR.

This sequence belongs to the outer membrane factor (OMF) (TC 1.B.17) family.

It is found in the cell membrane. In terms of biological role, involved in the resistance (detoxification) of the fungal toxin fusaric acid. The protein is Fusaric acid resistance protein FusA (fusA) of Burkholderia cepacia (Pseudomonas cepacia).